The chain runs to 323 residues: Small ribosomal subunit protein uS3 (323 aa).

In terms of domain architecture, KH type-2 spans 17–86 (IDEFFADELG…DPQIDVQEVD (70 aa)). Residues 251–303 (ADPGVSSEDEEVVTEPVDIGGDDEDVEDIEVVSDDSGNDTETVAEEVEELDAE) are disordered. Over residues 270–303 (GGDDEDVEDIEVVSDDSGNDTETVAEEVEELDAE) the composition is skewed to acidic residues.

This sequence belongs to the universal ribosomal protein uS3 family. Part of the 30S ribosomal subunit.

Binds the lower part of the 30S subunit head. The protein is Small ribosomal subunit protein uS3 of Haloquadratum walsbyi (strain DSM 16790 / HBSQ001).